Here is a 337-residue protein sequence, read N- to C-terminus: 4-hydroxyproline 2-epimerase (337 aa).

Residue C91 is the Proton acceptor of the active site. Substrate is bound by residues 92 to 93 (GH), D252, and 257 to 258 (GT).

Belongs to the proline racemase family.

It catalyses the reaction trans-4-hydroxy-L-proline = cis-4-hydroxy-D-proline. Its function is as follows. Catalyzes the epimerization of trans-4-hydroxy-L-proline (t4LHyp) to cis-4-hydroxy-D-proline (c4DHyp). Is involved in a degradation pathway that converts t4LHyp to alpha-ketoglutarate, which allows R.sphaeroides to grow on t4LHyp as a sole carbon source. Displays no proline racemase activity. This is 4-hydroxyproline 2-epimerase from Cereibacter sphaeroides (strain ATCC 17023 / DSM 158 / JCM 6121 / CCUG 31486 / LMG 2827 / NBRC 12203 / NCIMB 8253 / ATH 2.4.1.) (Rhodobacter sphaeroides).